We begin with the raw amino-acid sequence, 320 residues long: Cytochrome f (320 aa).

A signal peptide spans 1–35 (MQNRKTFSWVKEQMTRSIYVSIMIYVITRASISNA). Heme is bound by residues tyrosine 36, cysteine 56, cysteine 59, and histidine 60. A helical membrane pass occupies residues 286–306 (VQGLLFFLASVILAQIFLVLK).

Belongs to the cytochrome f family. As to quaternary structure, the 4 large subunits of the cytochrome b6-f complex are cytochrome b6, subunit IV (17 kDa polypeptide, petD), cytochrome f and the Rieske protein, while the 4 small subunits are PetG, PetL, PetM and PetN. The complex functions as a dimer. It depends on heme as a cofactor.

Its subcellular location is the plastid. The protein localises to the chloroplast thylakoid membrane. Functionally, component of the cytochrome b6-f complex, which mediates electron transfer between photosystem II (PSII) and photosystem I (PSI), cyclic electron flow around PSI, and state transitions. The protein is Cytochrome f of Phalaenopsis aphrodite subsp. formosana (Moth orchid).